The primary structure comprises 602 residues: GTP-binding protein 2 (602 aa).

Residues 16-64 (GGGPAVGGTLKARGAGSSSGCGGPKGKKKNGRNRGGKANNPPYLPPEAE) form a disordered region. The span at 40–50 (KGKKKNGRNRG) shows a compositional bias: basic residues. In terms of domain architecture, tr-type G spans 170 to 398 (FLDLRVAVLG…LNILPPLTNS (229 aa)). GTP is bound by residues 179–186 (GNVDSGKS), 260–264 (DLAGH), and 316–319 (SKID).

Belongs to the TRAFAC class translation factor GTPase superfamily. Classic translation factor GTPase family. GTPBP1 subfamily. Predominantly expressed in thymus, spleen, and testis. Expressed at lower levels in brain, lung, kidney, and ovary.

This Homo sapiens (Human) protein is GTP-binding protein 2.